Here is a 357-residue protein sequence, read N- to C-terminus: MSLENFGNFLTLDEKHSFIKKYFKEFYTKDFKLFTSKDKHYRTRAELSFYHENDTLFYAMFDPKSKKKYIIEYLDFADEKICAFMPKLLEYLRQDDKLKEKLFGVEFLTTKQELSVTLLYHKNIEDIKSNLENLSNNLHINLIARSKGKKLIFKTENLRQTLNIQDRKIFYEFNNDCFIQPNTAINEKMITWVCEILNTQKRMDLLELYCGYGNFTLALAPFFFKVLATEISKSNINFALKNCELNNTTNIHFARLSSEELSLAIKKEREFFRLKDIRLDDFNFSHVLVDPPRAGLDKSVIDLIKKYENIIYISCNPITLKENLKELSLTHRVEEFALFDQFVNTPHLECGVFLSKV.

Positions 180, 209, 214, 230, and 290 each coordinate S-adenosyl-L-methionine. C315 acts as the Nucleophile in catalysis. E349 (proton acceptor) is an active-site residue.

This sequence belongs to the class I-like SAM-binding methyltransferase superfamily. RNA M5U methyltransferase family. TrmA subfamily.

It carries out the reaction uridine(54) in tRNA + S-adenosyl-L-methionine = 5-methyluridine(54) in tRNA + S-adenosyl-L-homocysteine + H(+). It catalyses the reaction uridine(341) in tmRNA + S-adenosyl-L-methionine = 5-methyluridine(341) in tmRNA + S-adenosyl-L-homocysteine + H(+). Its function is as follows. Dual-specificity methyltransferase that catalyzes the formation of 5-methyluridine at position 54 (m5U54) in all tRNAs, and that of position 341 (m5U341) in tmRNA (transfer-mRNA). This is tRNA/tmRNA (uracil-C(5))-methyltransferase from Campylobacter jejuni subsp. jejuni serotype O:23/36 (strain 81-176).